The chain runs to 448 residues: D-inositol 3-phosphate glycosyltransferase (448 aa).

The interval 1 to 21 is disordered; sequence MAEQHTGVGRQRGARPWPRPR. His-29 provides a ligand contact to 1D-myo-inositol 3-phosphate. Residues 35 to 36 and Gly-43 contribute to the UDP-N-acetyl-alpha-D-glucosamine site; that span reads QP. 1D-myo-inositol 3-phosphate is bound by residues 40–45, Lys-98, Tyr-131, Thr-155, and Arg-175; that span reads DAGGMN. UDP-N-acetyl-alpha-D-glucosamine contacts are provided by Arg-255, Lys-260, and Gln-321. Mg(2+) contacts are provided by Tyr-330, Arg-331, and Ala-333. UDP-N-acetyl-alpha-D-glucosamine contacts are provided by Glu-343 and Glu-351. Residue Thr-357 coordinates Mg(2+).

This sequence belongs to the glycosyltransferase group 1 family. MshA subfamily. In terms of assembly, homodimer.

It catalyses the reaction 1D-myo-inositol 3-phosphate + UDP-N-acetyl-alpha-D-glucosamine = 1D-myo-inositol 2-acetamido-2-deoxy-alpha-D-glucopyranoside 3-phosphate + UDP + H(+). Functionally, catalyzes the transfer of a N-acetyl-glucosamine moiety to 1D-myo-inositol 3-phosphate to produce 1D-myo-inositol 2-acetamido-2-deoxy-glucopyranoside 3-phosphate in the mycothiol biosynthesis pathway. The polypeptide is D-inositol 3-phosphate glycosyltransferase (Salinispora arenicola (strain CNS-205)).